Reading from the N-terminus, the 296-residue chain is Bifunctional protein FolD 1/3 (296 aa).

NADP(+) is bound by residues 166 to 168, Ser191, and Ile232; that span reads GRS.

This sequence belongs to the tetrahydrofolate dehydrogenase/cyclohydrolase family. In terms of assembly, homodimer.

It catalyses the reaction (6R)-5,10-methylene-5,6,7,8-tetrahydrofolate + NADP(+) = (6R)-5,10-methenyltetrahydrofolate + NADPH. It carries out the reaction (6R)-5,10-methenyltetrahydrofolate + H2O = (6R)-10-formyltetrahydrofolate + H(+). It participates in one-carbon metabolism; tetrahydrofolate interconversion. Its function is as follows. Catalyzes the oxidation of 5,10-methylenetetrahydrofolate to 5,10-methenyltetrahydrofolate and then the hydrolysis of 5,10-methenyltetrahydrofolate to 10-formyltetrahydrofolate. This Ruegeria pomeroyi (strain ATCC 700808 / DSM 15171 / DSS-3) (Silicibacter pomeroyi) protein is Bifunctional protein FolD 1/3.